The sequence spans 357 residues: DNA replication and repair protein RecF (357 aa).

30–37 (GANGSGKT) contributes to the ATP binding site.

The protein belongs to the RecF family.

The protein localises to the cytoplasm. Its function is as follows. The RecF protein is involved in DNA metabolism; it is required for DNA replication and normal SOS inducibility. RecF binds preferentially to single-stranded, linear DNA. It also seems to bind ATP. This Salmonella schwarzengrund (strain CVM19633) protein is DNA replication and repair protein RecF.